The following is a 247-amino-acid chain: MRILLSNDDGYFAPGLNILAQHLAKVADIVVVAPERDRSGASNSLTLDRPLSVHRANNGFYYVNGTPTDCVHLAVTGLLDELPDMVISGINDGANMGDDTIYSGTVAAATEGFLLGVPSFAVSMSRHGVQHFETAAKFMVSLVKRYQKDRFPPPVLLNINVPDVPFDQIKGTEVTRLGKRHKAEPVIKSTTPRGQTVYWIGAAGSAQDAGDGTDFHAVSQNRISITPLQIDLTQYSQREQVKNWLAL.

A divalent metal cation is bound by residues D8, D9, S39, and N91.

Belongs to the SurE nucleotidase family. A divalent metal cation serves as cofactor.

It is found in the cytoplasm. The enzyme catalyses a ribonucleoside 5'-phosphate + H2O = a ribonucleoside + phosphate. Nucleotidase that shows phosphatase activity on nucleoside 5'-monophosphates. This chain is 5'-nucleotidase SurE, found in Methylobacillus flagellatus (strain ATCC 51484 / DSM 6875 / VKM B-1610 / KT).